Reading from the N-terminus, the 233-residue chain is tRNA (guanine-N(7)-)-methyltransferase (233 aa).

The segment at 1–36 (MSEFDPNPPRRNFYGRRHGKTLRQSQKGYLSEDLGS) is disordered. 4 residues coordinate S-adenosyl-L-methionine: glutamate 68, glutamate 93, aspartate 120, and aspartate 142. Aspartate 142 is a catalytic residue. Residues lysine 146, aspartate 178, and 211-214 (TRYE) each bind substrate.

The protein belongs to the class I-like SAM-binding methyltransferase superfamily. TrmB family.

The enzyme catalyses guanosine(46) in tRNA + S-adenosyl-L-methionine = N(7)-methylguanosine(46) in tRNA + S-adenosyl-L-homocysteine. The protein operates within tRNA modification; N(7)-methylguanine-tRNA biosynthesis. Its function is as follows. Catalyzes the formation of N(7)-methylguanine at position 46 (m7G46) in tRNA. The sequence is that of tRNA (guanine-N(7)-)-methyltransferase from Paracoccus denitrificans (strain Pd 1222).